Here is a 129-residue protein sequence, read N- to C-terminus: Small ribosomal subunit protein uS11 (129 aa).

The protein belongs to the universal ribosomal protein uS11 family. In terms of assembly, part of the 30S ribosomal subunit. Interacts with proteins S7 and S18. Binds to IF-3.

Located on the platform of the 30S subunit, it bridges several disparate RNA helices of the 16S rRNA. Forms part of the Shine-Dalgarno cleft in the 70S ribosome. This Staphylococcus epidermidis (strain ATCC 12228 / FDA PCI 1200) protein is Small ribosomal subunit protein uS11.